Reading from the N-terminus, the 202-residue chain is Dephospho-CoA kinase (202 aa).

A DPCK domain is found at 6–202 (KVSITGDLSS…EYFYALKGAL (197 aa)). 14-19 (SSGKTE) serves as a coordination point for ATP.

This sequence belongs to the CoaE family.

It localises to the cytoplasm. It catalyses the reaction 3'-dephospho-CoA + ATP = ADP + CoA + H(+). Its pathway is cofactor biosynthesis; coenzyme A biosynthesis; CoA from (R)-pantothenate: step 5/5. Its function is as follows. Catalyzes the phosphorylation of the 3'-hydroxyl group of dephosphocoenzyme A to form coenzyme A. This is Dephospho-CoA kinase from Chlamydia felis (strain Fe/C-56) (Chlamydophila felis).